An 860-amino-acid polypeptide reads, in one-letter code: uncharacterized protein (860 aa).

Composition is skewed to basic and acidic residues over residues Leu-334–Asn-345 and Glu-536–Lys-551. Disordered stretches follow at residues Leu-334–Glu-360, Glu-530–Lys-551, Ala-708–Phe-798, and Pro-813–Ile-842. Acidic residues-rich tracts occupy residues Asp-716 to Glu-725, Glu-738 to Glu-750, and Pro-813 to Gln-824. Phosphoserine is present on residues Ser-744 and Ser-748.

This sequence belongs to the CBF/MAK21 family.

This is an uncharacterized protein from Schizosaccharomyces pombe (strain 972 / ATCC 24843) (Fission yeast).